Consider the following 188-residue polypeptide: GTPase KRas (188 aa).

The residue at position 1 (Met1) is an N-acetylmethionine. Residue Thr2 is modified to N-acetylthreonine; in GTPase KRas, N-terminally processed. GTP is bound by residues 10–18 (GAGGVGKSA), 29–35 (VDEYDPT), and 59–60 (AG). The short motif at 32-40 (YDPTIEDSY) is the Effector region element. Lys104 is subject to N6-acetyllysine. Residue 116 to 119 (NKCD) participates in GTP binding. The interval 166–185 (HKEKMSKDGKKKKKKSKTKC) is hypervariable region. Residues 167–188 (KEKMSKDGKKKKKKSKTKCIIM) are disordered. Cys185 is subject to Cysteine methyl ester. Residue Cys185 is the site of S-farnesyl cysteine attachment. Positions 186-188 (IIM) are cleaved as a propeptide — removed in mature form.

Belongs to the small GTPase superfamily. Ras family. In terms of assembly, interacts with PHLPP. Interacts (active GTP-bound form preferentially) with RGS14. Interacts (when farnesylated) with PDE6D; this promotes dissociation from the cell membrane. Interacts with SOS1. Interacts (when farnesylated) with GPR31. Interacts with RAP1GDS1. Interacts (active GTP-bound form) with both SHOC2 and PP1c (all isoforms) to form a tertiary complex; SHOC2 and PP1c preferably bind M-Ras/MRAS, but they also bind K-Ras/KRAS, N-Ras/NRAS and H-Ras/HRAS. Interacts (GTP-bound form) with MAPKAP1/SIN1; inhibiting K-Ras/KRAS activity. Post-translationally, acetylation at Lys-104 prevents interaction with guanine nucleotide exchange factors (GEFs).

It localises to the cell membrane. Its subcellular location is the cytoplasm. The protein resides in the cytosol. The catalysed reaction is GTP + H2O = GDP + phosphate + H(+). Its activity is regulated as follows. Alternates between an inactive form bound to GDP and an active form bound to GTP. Activated by a guanine nucleotide-exchange factor (GEF) and inactivated by a GTPase-activating protein (GAP). Interaction with SOS1 promotes exchange of bound GDP to GTP. Its function is as follows. Ras proteins bind GDP/GTP and possess intrinsic GTPase activity. Plays an important role in the regulation of cell proliferation. Plays a role in promoting oncogenic events by inducing transcriptional silencing of tumor suppressor genes (TSGs) in colorectal cancer (CRC) cells in a ZNF304-dependent manner. In Monodelphis domestica (Gray short-tailed opossum), this protein is GTPase KRas (KRAS).